The chain runs to 280 residues: Energy-coupling factor transporter ATP-binding protein EcfA1 (280 aa).

In terms of domain architecture, ABC transporter spans 7-241 (IEVAHLKYEY…GQRLLDLGLD (235 aa)). 41-48 (GHNGSGKS) is a binding site for ATP.

This sequence belongs to the ABC transporter superfamily. Energy-coupling factor EcfA family. In terms of assembly, forms a stable energy-coupling factor (ECF) transporter complex composed of 2 membrane-embedded substrate-binding proteins (S component), 2 ATP-binding proteins (A component) and 2 transmembrane proteins (T component).

The protein localises to the cell membrane. ATP-binding (A) component of a common energy-coupling factor (ECF) ABC-transporter complex. Unlike classic ABC transporters this ECF transporter provides the energy necessary to transport a number of different substrates. In Latilactobacillus sakei subsp. sakei (strain 23K) (Lactobacillus sakei subsp. sakei), this protein is Energy-coupling factor transporter ATP-binding protein EcfA1.